Here is a 36-residue protein sequence, read N- to C-terminus: Beta/delta/mu-theraphotoxin-Pv1 (36 aa).

Disulfide bonds link C3–C17, C10–C22, and C16–C30. F36 is modified (phenylalanine amide).

Belongs to the neurotoxin 10 (Hwtx-1) family. Expressed by the venom gland.

The protein localises to the secreted. In terms of biological role, gating-modifier toxin that targets voltage-gated sodium channels. Inhibits the inactivation of Nav1.7/SCN9A. The polypeptide is Beta/delta/mu-theraphotoxin-Pv1 (Poecilotheria vittata (Ghost ornamental tarantula)).